Reading from the N-terminus, the 347-residue chain is Beta-hexosaminidase (347 aa).

Substrate-binding positions include Asp62, Arg70, Arg134, and 164–165; that span reads KH. His177 functions as the Proton donor/acceptor in the catalytic mechanism. Catalysis depends on Asp249, which acts as the Nucleophile.

It belongs to the glycosyl hydrolase 3 family. NagZ subfamily.

Its subcellular location is the cytoplasm. It carries out the reaction Hydrolysis of terminal non-reducing N-acetyl-D-hexosamine residues in N-acetyl-beta-D-hexosaminides.. Its pathway is cell wall biogenesis; peptidoglycan recycling. Plays a role in peptidoglycan recycling by cleaving the terminal beta-1,4-linked N-acetylglucosamine (GlcNAc) from peptide-linked peptidoglycan fragments, giving rise to free GlcNAc, anhydro-N-acetylmuramic acid and anhydro-N-acetylmuramic acid-linked peptides. The protein is Beta-hexosaminidase of Mannheimia succiniciproducens (strain KCTC 0769BP / MBEL55E).